Consider the following 151-residue polypeptide: Deoxyuridine 5'-triphosphate nucleotidohydrolase (151 aa).

Substrate-binding positions include 70–72 (RSG), Asn-83, 87–89 (LID), and Met-97.

It belongs to the dUTPase family. The cofactor is Mg(2+).

It catalyses the reaction dUTP + H2O = dUMP + diphosphate + H(+). Its pathway is pyrimidine metabolism; dUMP biosynthesis; dUMP from dCTP (dUTP route): step 2/2. Its function is as follows. This enzyme is involved in nucleotide metabolism: it produces dUMP, the immediate precursor of thymidine nucleotides and it decreases the intracellular concentration of dUTP so that uracil cannot be incorporated into DNA. This Actinobacillus succinogenes (strain ATCC 55618 / DSM 22257 / CCUG 43843 / 130Z) protein is Deoxyuridine 5'-triphosphate nucleotidohydrolase.